The primary structure comprises 145 residues: Ribonuclease H (145 aa).

Residues 1-142 (MDTPVYLYTD…ADDLANRGAA (142 aa)) form the RNase H type-1 domain. Mg(2+) is bound by residues Asp-10, Glu-48, Asp-70, and Asp-134.

Belongs to the RNase H family. Monomer. Mg(2+) is required as a cofactor.

The protein localises to the cytoplasm. It carries out the reaction Endonucleolytic cleavage to 5'-phosphomonoester.. Its function is as follows. Endonuclease that specifically degrades the RNA of RNA-DNA hybrids. In Neisseria meningitidis serogroup C / serotype 2a (strain ATCC 700532 / DSM 15464 / FAM18), this protein is Ribonuclease H.